The sequence spans 553 residues: Membrane protein insertase YidC (553 aa).

5 consecutive transmembrane segments (helical) span residues 7-24 (VLWV…DNWQ), 365-385 (WGWA…PLSA), 435-455 (LPVV…LASV), 474-494 (PYFI…SLNP), and 509-529 (PIAF…YYVV).

Belongs to the OXA1/ALB3/YidC family. Type 1 subfamily. Interacts with the Sec translocase complex via SecD. Specifically interacts with transmembrane segments of nascent integral membrane proteins during membrane integration.

The protein localises to the cell inner membrane. In terms of biological role, required for the insertion and/or proper folding and/or complex formation of integral membrane proteins into the membrane. Involved in integration of membrane proteins that insert both dependently and independently of the Sec translocase complex, as well as at least some lipoproteins. Aids folding of multispanning membrane proteins. The sequence is that of Membrane protein insertase YidC from Burkholderia multivorans (strain ATCC 17616 / 249).